We begin with the raw amino-acid sequence, 96 residues long: Transmembrane protein PMIS2 (96 aa).

The next 2 helical transmembrane spans lie at 31–51 and 76–96; these read VMLA…AIYF and WFNM…VLVL.

It belongs to the CD225/Dispanin family. As to expression, specifically expressed in testis.

It is found in the membrane. Functionally, may play a role in spermatozoa mobility. The protein is Transmembrane protein PMIS2 of Mus musculus (Mouse).